Reading from the N-terminus, the 149-residue chain is Urease accessory protein UreE (149 aa).

Belongs to the UreE family.

It localises to the cytoplasm. Involved in urease metallocenter assembly. Binds nickel. Probably functions as a nickel donor during metallocenter assembly. The protein is Urease accessory protein UreE of Prochlorococcus marinus (strain MIT 9301).